Consider the following 1530-residue polypeptide: Synaptonemal complex protein 2 (1530 aa).

Residues E439 to N461 are compositionally biased toward basic and acidic residues. The interval E439–A480 is disordered. Phosphoserine occurs at positions 457 and 465. T471 is subject to Phosphothreonine. Phosphoserine is present on residues S494, S519, S529, and S538. A disordered region spans residues V496 to K555. Over residues Q515–E530 the composition is skewed to polar residues. A compositionally biased stretch (basic and acidic residues) spans R542–K555. Phosphothreonine is present on T619. Disordered stretches follow at residues Q653 to Q676, H693 to P717, and D755 to K795. S660 and S664 each carry phosphoserine. 2 stretches are compositionally biased toward polar residues: residues Q695–Q713 and D755–V764. S936 carries the phosphoserine modification. T938 carries the post-translational modification Phosphothreonine. Residues Q962 to M1003 form a disordered region. Residues K970–K979 are compositionally biased toward basic residues. The span at Q988 to N998 shows a compositional bias: polar residues. S1136, S1138, S1145, S1161, and S1177 each carry phosphoserine. The residue at position 1189 (T1189) is a Phosphothreonine. 5 positions are modified to phosphoserine: S1204, S1234, S1253, S1295, and S1297. Residue T1339 is modified to Phosphothreonine.

This sequence belongs to the SYCP2 family. In terms of assembly, component of the lateral elements of synaptonemal complexes. Heterodimer with SYCP3. Interacts with SMC1A and SMC3. Interacts with TEX11. Phosphorylated.

The protein localises to the nucleus. The protein resides in the chromosome. Its function is as follows. Major component of the axial/lateral elements of synaptonemal complexes (SCS) during meiotic prophase. Plays a role in the assembly of synaptonemal complexes. Required for normal meiotic chromosome synapsis during oocyte and spermatocyte development and for normal male and female fertility. Required for insertion of SYCP3 into synaptonemal complexes. May be involved in the organization of chromatin by temporarily binding to DNA scaffold attachment regions. Requires SYCP3, but not SYCP1, in order to be incorporated into the axial/lateral elements. This is Synaptonemal complex protein 2 (SYCP2) from Homo sapiens (Human).